A 398-amino-acid polypeptide reads, in one-letter code: Succinate--CoA ligase [ADP-forming] subunit beta (398 aa).

An ATP-grasp domain is found at 9–254 (KRLLHTYGAP…LSEEDEKEIE (246 aa)). ATP contacts are provided by residues Lys-46, 53–55 (GRG), Glu-109, Ala-112, and Glu-117. Asn-209 and Asp-223 together coordinate Mg(2+). Residues Asn-274 and 331-333 (GIM) contribute to the substrate site.

This sequence belongs to the succinate/malate CoA ligase beta subunit family. Heterotetramer of two alpha and two beta subunits. Mg(2+) serves as cofactor.

The enzyme catalyses succinate + ATP + CoA = succinyl-CoA + ADP + phosphate. It catalyses the reaction GTP + succinate + CoA = succinyl-CoA + GDP + phosphate. The protein operates within carbohydrate metabolism; tricarboxylic acid cycle; succinate from succinyl-CoA (ligase route): step 1/1. In terms of biological role, succinyl-CoA synthetase functions in the citric acid cycle (TCA), coupling the hydrolysis of succinyl-CoA to the synthesis of either ATP or GTP and thus represents the only step of substrate-level phosphorylation in the TCA. The beta subunit provides nucleotide specificity of the enzyme and binds the substrate succinate, while the binding sites for coenzyme A and phosphate are found in the alpha subunit. This chain is Succinate--CoA ligase [ADP-forming] subunit beta, found in Brucella anthropi (strain ATCC 49188 / DSM 6882 / CCUG 24695 / JCM 21032 / LMG 3331 / NBRC 15819 / NCTC 12168 / Alc 37) (Ochrobactrum anthropi).